Reading from the N-terminus, the 470-residue chain is Acyltransferase BOA11 (470 aa).

His-156 serves as the catalytic Proton acceptor.

The protein belongs to the plant acyltransferase family.

The protein operates within polyketide biosynthesis. Functionally, acyltransferase; part of the gene cluster B that mediates the biosynthesis of botcinic acid and its botcinin derivatives, acetate-derived polyketides that contribute to virulence when combined with the sesquiterpene botrydial. Botcinic acid and its derivatives have been shown to induce chlorosis and necrosis during host plant infection, but also have antifungal activities. Two polyketide synthases, BOA6 and BOA9, are involved in the biosynthesis of botcinins. BOA6 mediates the formation of the per-methylated tetraketide core by condensation of four units of malonyl-CoA with one unit of acetyl-CoA, which would be methylated in activated methylene groups to yield a bicyclic acid intermediate that could then either be converted to botrylactone derivatives or lose the starter acetate unit through a retro-Claisen type C-C bond cleavage to yield botcinin derivatives. The second polyketide synthase, BOA9, is probably required for the biosynthesis of the tetraketide side chain of botcinins. The methyltransferase (MT) domain within BOA6 is probably responsible for the incorporation of four methyl groups. The trans-enoyl reductase BOA5 might take over the enoyl reductase function of BOA6 that misses an ER domain. The monooxygenases BOA2, BOA3 and BOA4 might be involved in further hydroxylations at C4, C5 and C8, whereas BOA7, close to BOA9, could potentially be involved in the hydroxylation at C4 in the side chain of botcinins. The chain is Acyltransferase BOA11 from Botryotinia fuckeliana (strain B05.10) (Noble rot fungus).